The sequence spans 790 residues: MLVPLSLLQKFFSSPLSIEEILQACDRIGIEAECSNVFPDSLNTVVTGKILSASPHPDAERLTVAIVFDGKGERQIICGAPNCRAGIIVPIALPGAKLRNASGEITTIKKAKVRGLESQGMCCGADELGFPHLQKAERGIFEFPADTPLGESACMLLAGAPLECSLTPNLGHCASLLGLAREISFLSPVSLNIPEEFSFASLPQETSICDMHDAGACPIFYSVKISGLSCRRSPEYLQAALTALGQKPLNAIVDITNYVMLSLGQPLHAYDSQAVEQKSLHAATLQSAQPLTLLNQETYTLPAGSLVVADQHNILGLAGVMGSAASSCSENTTEIILEAAYFQPQAVRKYQRTIQLHTEAAYRFTRGVDPQGVLPVLHAAIHMIQSLFPDAQISPIQKIGDDSFSPLSLSVRPKTIKRLLDIEFSTAEIVAKLSSLGFQTAVEEQAVRVEVPSYRHDIQEETDLVEEICRTTPFVQKTQKILPTYTPIYSLKRELTAFLANGGLQQFFTYSLLDTEVSSLSLQESSLIPVQNSSWKLRDSLLPGMLKSAATNLHRQAPYVYAFEIGNVYSKEQNRYQEEERVAILLSRQVMDDSWQGKTPLSFYTIKGWVEKLLCQSGASIEDFSLQPSQHPNFHPYQQAALYQKKHLLGIFGTLHPQLCRKAQIKHDVVFAELSLNVLLSLKKKSGPHYVPYPIYPASSRDITITIDRDLPADLVRRELLSFESKWLESVHIVSVYQGRDSASQSKNVSLRMVFRDHERTLSGQEIEEEYERLTALLDKKLANIGQGNS.

The 116-residue stretch at 39–154 folds into the tRNA-binding domain; that stretch reads PDSLNTVVTG…ADTPLGESAC (116 aa). The B5 domain occupies 404–483; it reads FSPLSLSVRP…FVQKTQKILP (80 aa). D457, D463, E466, and E467 together coordinate Mg(2+). The 97-residue stretch at 694 to 790 folds into the FDX-ACB domain; the sequence is PIYPASSRDI…KLANIGQGNS (97 aa).

It belongs to the phenylalanyl-tRNA synthetase beta subunit family. Type 1 subfamily. As to quaternary structure, tetramer of two alpha and two beta subunits. Mg(2+) is required as a cofactor.

It localises to the cytoplasm. It catalyses the reaction tRNA(Phe) + L-phenylalanine + ATP = L-phenylalanyl-tRNA(Phe) + AMP + diphosphate + H(+). This chain is Phenylalanine--tRNA ligase beta subunit, found in Chlamydia trachomatis serovar A (strain ATCC VR-571B / DSM 19440 / HAR-13).